We begin with the raw amino-acid sequence, 288 residues long: Diaminopimelate epimerase (288 aa).

Positions 14 and 67 each coordinate substrate. The active-site Proton donor is cysteine 76. Residues 77–78 (GN), asparagine 166, asparagine 199, and 217–218 (ER) contribute to the substrate site. The active-site Proton acceptor is the cysteine 226. Residue 227-228 (GT) participates in substrate binding.

This sequence belongs to the diaminopimelate epimerase family. Homodimer.

The protein resides in the cytoplasm. It catalyses the reaction (2S,6S)-2,6-diaminopimelate = meso-2,6-diaminopimelate. It participates in amino-acid biosynthesis; L-lysine biosynthesis via DAP pathway; DL-2,6-diaminopimelate from LL-2,6-diaminopimelate: step 1/1. In terms of biological role, catalyzes the stereoinversion of LL-2,6-diaminopimelate (L,L-DAP) to meso-diaminopimelate (meso-DAP), a precursor of L-lysine and an essential component of the bacterial peptidoglycan. The protein is Diaminopimelate epimerase of Bacillus mycoides (strain KBAB4) (Bacillus weihenstephanensis).